Reading from the N-terminus, the 72-residue chain is UPF0352 protein CGSHiGG_07710 (72 aa).

It belongs to the UPF0352 family.

The sequence is that of UPF0352 protein CGSHiGG_07710 from Haemophilus influenzae (strain PittGG).